The chain runs to 178 residues: Cell division protein SepF (178 aa).

Residues 19–45 show a composition bias toward basic and acidic residues; it reads EHYESEHHTPHKDEDDSMEHDREERRA. The disordered stretch occupies residues 19–65; that stretch reads EHYESEHHTPHKDEDDSMEHDREERRAPAPVREIARETPTPHAAEEE.

This sequence belongs to the SepF family. Homodimer. Interacts with FtsZ.

Its subcellular location is the cytoplasm. In terms of biological role, cell division protein that is part of the divisome complex and is recruited early to the Z-ring. Probably stimulates Z-ring formation, perhaps through the cross-linking of FtsZ protofilaments. Its function overlaps with FtsA. This chain is Cell division protein SepF, found in Arthrobacter sp. (strain FB24).